The chain runs to 62 residues: Delta-theraphotoxin-Cg1a 1 (62 aa).

The first 21 residues, 1–21 (MKTSILFVIFSLALLFALSAA), serve as a signal peptide directing secretion. Residues 22 to 29 (TEIEETDR) constitute a propeptide that is removed on maturation. 3 cysteine pairs are disulfide-bonded: Cys-31–Cys-46, Cys-38–Cys-51, and Cys-45–Cys-58.

Belongs to the neurotoxin 10 (Hwtx-1) family. 33 (Jztx-1) subfamily. In terms of tissue distribution, expressed by the venom gland.

It is found in the secreted. In terms of biological role, inhibits voltage-gated sodium channels, preferentially subtype Nav1.5/SCN5A (in cardiac myocytes), but also Nav1.6/SCN8A and Nav1.7/SCN9A (TTX-sensitive Nav in rat DRG neurons) and invertebrate Nav (in insect neurons) as well as voltage-gated potassium channels of the subtype Kv2.1/KCNB1. Is suggested to bind to site 3 of the sodium channels and inhibit the inactivation of the activated channels, thereby blocking neuronal transmission. On potassium channels, inhibits activation of channels with an IC(50) of 8.05 uM through a voltage sensor-trapping mechanism. Increases muscle contraction in several assays (mouse phrenic nerve-diaphragm, toad heart, rat vas deferens) and is suggested to act both presynaptically and postsynaptically. Its function is as follows. Moderately inhibits voltage-gated sodium channels and weakly inhibits voltage-gated potassium channel. Inhibits the inactivation of rat Nav1.2/SCN2A (IC(50)=870 nM), rat Nav1.3/SCN3A (IC(50)=845 nM), rat Nav1.4/SCN4A (IC(50)=339 nM), human Nav1.5/SCN5A (IC(50)=335 nM) and human Nav1.7/SCN9A sodium channels (IC(50)=348 nM). The toxin delays the inactivation of sodium channels without affecting the activation and steady-state inactivation kinetics in the physiological range of voltages. Site-directed mutagenesis of the sodium channel indicates that the toxin interacts with site 3 located at the extracellular S3-S4 linker of domain IV. On potassium channels, it inhibits activation of channels with an IC(50) of 8.05 uM through a voltage sensor-trapping mechanism. It increases muscle contraction in several assays (mouse phrenic nerve-diaphragm, toad heart, rat vas deferens) and is suggested to act both presynaptically and postsynaptically. This is Delta-theraphotoxin-Cg1a 1 from Chilobrachys guangxiensis (Chinese earth tiger tarantula).